The chain runs to 762 residues: Phosphoribosylformylglycinamidine synthase subunit PurL (762 aa).

Residue His58 is part of the active site. ATP-binding residues include Tyr61 and Arg105. Position 107 (Glu107) interacts with Mg(2+). Substrate contacts are provided by residues Ser108 to His111 and Arg130. The active-site Proton acceptor is His109. Asp131 contributes to the Mg(2+) binding site. Substrate is bound at residue Gln255. Asp283 lines the Mg(2+) pocket. Substrate is bound at residue Glu327–Gln329. ATP contacts are provided by Asn513 and Gly550. Residue Asn551 coordinates Mg(2+). Ser553 contributes to the substrate binding site.

It belongs to the FGAMS family. Monomer. Part of the FGAM synthase complex composed of 1 PurL, 1 PurQ and 2 PurS subunits.

The protein localises to the cytoplasm. The enzyme catalyses N(2)-formyl-N(1)-(5-phospho-beta-D-ribosyl)glycinamide + L-glutamine + ATP + H2O = 2-formamido-N(1)-(5-O-phospho-beta-D-ribosyl)acetamidine + L-glutamate + ADP + phosphate + H(+). It participates in purine metabolism; IMP biosynthesis via de novo pathway; 5-amino-1-(5-phospho-D-ribosyl)imidazole from N(2)-formyl-N(1)-(5-phospho-D-ribosyl)glycinamide: step 1/2. In terms of biological role, part of the phosphoribosylformylglycinamidine synthase complex involved in the purines biosynthetic pathway. Catalyzes the ATP-dependent conversion of formylglycinamide ribonucleotide (FGAR) and glutamine to yield formylglycinamidine ribonucleotide (FGAM) and glutamate. The FGAM synthase complex is composed of three subunits. PurQ produces an ammonia molecule by converting glutamine to glutamate. PurL transfers the ammonia molecule to FGAR to form FGAM in an ATP-dependent manner. PurS interacts with PurQ and PurL and is thought to assist in the transfer of the ammonia molecule from PurQ to PurL. The polypeptide is Phosphoribosylformylglycinamidine synthase subunit PurL (Corynebacterium glutamicum (strain ATCC 13032 / DSM 20300 / JCM 1318 / BCRC 11384 / CCUG 27702 / LMG 3730 / NBRC 12168 / NCIMB 10025 / NRRL B-2784 / 534)).